Here is a 483-residue protein sequence, read N- to C-terminus: GTPase Der (483 aa).

EngA-type G domains lie at 3 to 167 (FTVA…GEER) and 212 to 387 (LRIA…EIWN). Residues 9 to 16 (GRPNVGKS), 56 to 60 (DTAGL), 119 to 122 (NKAE), 218 to 225 (GRPNAGKS), 265 to 269 (DTAGL), and 330 to 333 (NKWD) each bind GTP. Positions 388-472 (RRVSTGRLNR…PIRLSLRTSD (85 aa)) constitute a KH-like domain.

It belongs to the TRAFAC class TrmE-Era-EngA-EngB-Septin-like GTPase superfamily. EngA (Der) GTPase family. Associates with the 50S ribosomal subunit.

Its function is as follows. GTPase that plays an essential role in the late steps of ribosome biogenesis. The chain is GTPase Der from Brucella anthropi (strain ATCC 49188 / DSM 6882 / CCUG 24695 / JCM 21032 / LMG 3331 / NBRC 15819 / NCTC 12168 / Alc 37) (Ochrobactrum anthropi).